A 294-amino-acid chain; its full sequence is Zinc finger protein 346 (294 aa).

Methionine 1 carries the N-acetylmethionine modification. A compositionally biased stretch (low complexity) spans 1–19; that stretch reads MECPAPDATDAADPGEAGP. The interval 1-35 is disordered; the sequence is MECPAPDATDAADPGEAGPYKGSEEPEGREPDGVR. Basic and acidic residues predominate over residues 22 to 35; that stretch reads GSEEPEGREPDGVR. A Matrin-type 1 zinc finger spans residues 70–104; sequence FTSTQCKVCCAMLISESQKLAHYQSKKHANKVKRY. Residues cysteine 75, cysteine 78, histidine 91, and histidine 97 each coordinate Zn(2+). A Glycyl lysine isopeptide (Lys-Gly) (interchain with G-Cter in SUMO2) cross-link involves residue lysine 114. Residues 131-165 form a Matrin-type 2 zinc finger; the sequence is DKNHCCPICNMTFSSPAVAQSHYLGKTHAKSLKLK. Positions 136, 139, 152, and 158 each coordinate Zn(2+). A Glycyl lysine isopeptide (Lys-Gly) (interchain with G-Cter in SUMO2) cross-link involves residue lysine 170. 2 Matrin-type zinc fingers span residues 182-216 and 236-270; these read DPDK…ETKL and GKGY…SPKT. Residues 269–294 form a disordered region; that stretch reads KTLVTLGSQTPVQTQPTPKDSSTVQD.

Forms a heteromeric complex with XPO5 and ILF3. Found in a nuclear export complex with XPO5, RAN, ILF3, ZNF346 and double-stranded RNA. Interacts with XPO5. Interacts with ILF3 in an RNA-independent manner. As to expression, expressed in all tissues tested, including heart, brain, spleen, lung, liver, muscle, kidney and testis. Exogenous expression induced apoptosis.

The protein resides in the nucleus. It is found in the nucleolus. Its subcellular location is the cytoplasm. Binds with low affinity to dsDNA and ssRNA, and with high affinity to dsRNA, with no detectable sequence specificity. May bind to specific miRNA hairpins. This is Zinc finger protein 346 (Znf346) from Mus musculus (Mouse).